Reading from the N-terminus, the 460-residue chain is Wadjet protein JetA (460 aa).

In terms of biological role, component of antiplasmid transformation system Wadjet type I, composed of JetA, JetB, JetC and JetD. Expression of Wadjet type I in B.subtilis (strain BEST7003) reduces the transformation efficiency of plasmid pHCMC05. The protein is Wadjet protein JetA of Bacillus cereus (strain Q1).